The primary structure comprises 284 residues: Co-chaperone protein DjlA (284 aa).

At 1 to 6 (MHIFGK) the chain is on the periplasmic side. Residues 7-30 (ILGAFFGFLFGGPFGAIFGIFLGH) form a helical membrane-spanning segment. The Cytoplasmic portion of the chain corresponds to 31–284 (QFDKARRLNQ…ELIRKEKGIK (254 aa)). The interval 190–211 (QGGGFGGSQQQSHSGQQWQQPS) is disordered. Residues 197 to 211 (SQQQSHSGQQWQQPS) show a composition bias toward low complexity. The region spanning 218-284 (DAYEVLGVSE…ELIRKEKGIK (67 aa)) is the J domain.

As to quaternary structure, homodimer.

It is found in the cell inner membrane. Regulatory DnaK co-chaperone. Direct interaction between DnaK and DjlA is needed for the induction of the wcaABCDE operon, involved in the synthesis of a colanic acid polysaccharide capsule, possibly through activation of the RcsB/RcsC phosphotransfer signaling pathway. The colanic acid capsule may help the bacterium survive conditions outside the host. This is Co-chaperone protein DjlA from Vibrio cholerae serotype O1 (strain ATCC 39315 / El Tor Inaba N16961).